A 258-amino-acid polypeptide reads, in one-letter code: Sec-independent protein translocase protein TatC (258 aa).

Topologically, residues 2–23 (SVEDTQPLITHLIELRKRLLNC) are cytoplasmic. Residues 24-44 (IISVIVIFLCLVYFANDIYHL) traverse the membrane as a helical segment. The Periplasmic portion of the chain corresponds to 45 to 75 (VSAPLIKQLPQGSTMIATDVASPFFTPIKLT). The chain crosses the membrane as a helical span at residues 76–96 (FMVSLILSAPVILYQVWAFIA). At 97-115 (PALYKHERRLVVPLLVSSS) the chain is on the cytoplasmic side. Residues 116-136 (LLFYIGMAFAYFVVFPLAFGF) form a helical membrane-spanning segment. Residues 137–156 (LANTAPEGVQVSTDIASYLS) are Periplasmic-facing. Residues 157–177 (FVMALFMAFGVSFEVPVAIVL) traverse the membrane as a helical segment. Topologically, residues 178–192 (LCWMGITSPEDLRKK) are cytoplasmic. The helical transmembrane segment at 193 to 210 (RPYVLVGAFVVGMLLTPP) threads the bilayer. Position 211 (Asp-211) is a topological domain, periplasmic. Residues 212 to 232 (VFSQTLLAIPMYCLFEIGVFF) form a helical membrane-spanning segment. The Cytoplasmic portion of the chain corresponds to 233–258 (SRFYVGKGRNREEENDAEAESEKTEE).

It belongs to the TatC family. In terms of assembly, the Tat system comprises two distinct complexes: a TatABC complex, containing multiple copies of TatA, TatB and TatC subunits, and a separate TatA complex, containing only TatA subunits. Substrates initially bind to the TatABC complex, which probably triggers association of the separate TatA complex to form the active translocon.

It localises to the cell inner membrane. Its function is as follows. Part of the twin-arginine translocation (Tat) system that transports large folded proteins containing a characteristic twin-arginine motif in their signal peptide across membranes. Together with TatB, TatC is part of a receptor directly interacting with Tat signal peptides. The sequence is that of Sec-independent protein translocase protein TatC from Escherichia coli O6:H1 (strain CFT073 / ATCC 700928 / UPEC).